The chain runs to 182 residues: ATP-dependent protease subunit HslV (182 aa).

T12 is a catalytic residue. 3 residues coordinate Na(+): A167, C170, and T173.

The protein belongs to the peptidase T1B family. HslV subfamily. A double ring-shaped homohexamer of HslV is capped on each side by a ring-shaped HslU homohexamer. The assembly of the HslU/HslV complex is dependent on binding of ATP.

It is found in the cytoplasm. The enzyme catalyses ATP-dependent cleavage of peptide bonds with broad specificity.. Its activity is regulated as follows. Allosterically activated by HslU binding. Its function is as follows. Protease subunit of a proteasome-like degradation complex believed to be a general protein degrading machinery. The polypeptide is ATP-dependent protease subunit HslV (Chlorobium chlorochromatii (strain CaD3)).